The chain runs to 186 residues: MTLTPEDRTIILDSIRDIPDFPKPGIVFKDITTLLNNPKALSTLMDHLTERYLGYDLDYIAGIDARGFIFGSILADRLGVGFVPVRKKGKLPYTTVAEKYSLEYGFDEVEIHIDAFGENGCCSTGERSKVLLIDDLIATGGTAKAAANLIDKVGAHCVEACFIMELGFLNSKEGFSAPVYSVLEID.

This sequence belongs to the purine/pyrimidine phosphoribosyltransferase family. Homodimer.

It is found in the cytoplasm. It carries out the reaction AMP + diphosphate = 5-phospho-alpha-D-ribose 1-diphosphate + adenine. The protein operates within purine metabolism; AMP biosynthesis via salvage pathway; AMP from adenine: step 1/1. In terms of biological role, catalyzes a salvage reaction resulting in the formation of AMP, that is energically less costly than de novo synthesis. The sequence is that of Adenine phosphoribosyltransferase from Sulfurovum sp. (strain NBC37-1).